Reading from the N-terminus, the 214-residue chain is Probable transaldolase (214 aa).

The active-site Schiff-base intermediate with substrate is Lys-83.

This sequence belongs to the transaldolase family. Type 3B subfamily.

It is found in the cytoplasm. It carries out the reaction D-sedoheptulose 7-phosphate + D-glyceraldehyde 3-phosphate = D-erythrose 4-phosphate + beta-D-fructose 6-phosphate. It functions in the pathway carbohydrate degradation; pentose phosphate pathway; D-glyceraldehyde 3-phosphate and beta-D-fructose 6-phosphate from D-ribose 5-phosphate and D-xylulose 5-phosphate (non-oxidative stage): step 2/3. Its function is as follows. Transaldolase is important for the balance of metabolites in the pentose-phosphate pathway. The chain is Probable transaldolase from Alkaliphilus metalliredigens (strain QYMF).